A 273-amino-acid polypeptide reads, in one-letter code: 3-methyl-2-oxobutanoate hydroxymethyltransferase (273 aa).

Residues Asp53 and Asp92 each coordinate Mg(2+). Residues 53 to 54 (DS), Asp92, and Lys120 contribute to the 3-methyl-2-oxobutanoate site. Glu122 is a binding site for Mg(2+). The active-site Proton acceptor is the Glu189.

This sequence belongs to the PanB family. As to quaternary structure, homodecamer; pentamer of dimers. Requires Mg(2+) as cofactor.

The protein localises to the cytoplasm. It carries out the reaction 3-methyl-2-oxobutanoate + (6R)-5,10-methylene-5,6,7,8-tetrahydrofolate + H2O = 2-dehydropantoate + (6S)-5,6,7,8-tetrahydrofolate. Its pathway is cofactor biosynthesis; (R)-pantothenate biosynthesis; (R)-pantoate from 3-methyl-2-oxobutanoate: step 1/2. In terms of biological role, catalyzes the reversible reaction in which hydroxymethyl group from 5,10-methylenetetrahydrofolate is transferred onto alpha-ketoisovalerate to form ketopantoate. This Cupriavidus necator (strain ATCC 17699 / DSM 428 / KCTC 22496 / NCIMB 10442 / H16 / Stanier 337) (Ralstonia eutropha) protein is 3-methyl-2-oxobutanoate hydroxymethyltransferase.